We begin with the raw amino-acid sequence, 248 residues long: Large ribosomal subunit protein uL30 (248 aa).

Methionine 1 carries the post-translational modification N-acetylmethionine. 4 consecutive repeat copies span residues 7 to 18 (KKKKVPAVPETL), 19 to 30 (KKKRKNFAELKI), 31 to 42 (KRLRKKFAQKML), and 43 to 54 (RKARRKLIYEKA). The segment at 7–54 (KKKKVPAVPETLKKKRKNFAELKIKRLRKKFAQKMLRKARRKLIYEKA) is 4 X 12 AA tandem repeats. Threonine 17 is subject to Phosphothreonine. Lysine 124 bears the N6-acetyllysine mark. Lysine 127 bears the N6-succinyllysine mark. Phosphotyrosine is present on tyrosine 139.

The protein belongs to the universal ribosomal protein uL30 family. As to quaternary structure, component of the large ribosomal subunit. Homodimer. Interacts with DHX33.

The protein resides in the cytoplasm. Functionally, component of the large ribosomal subunit. The ribosome is a large ribonucleoprotein complex responsible for the synthesis of proteins in the cell. Binds to G-rich structures in 28S rRNA and in mRNAs. Plays a regulatory role in the translation apparatus; inhibits cell-free translation of mRNAs. The chain is Large ribosomal subunit protein uL30 (RPL7) from Bos taurus (Bovine).